We begin with the raw amino-acid sequence, 117 residues long: B-box domain protein 30 (117 aa).

A B box-type; atypical zinc finger spans residues 27 to 73 (KAPVSCELCGENATVYCEADAAFLCRKCDRWVHSANFLARRHLRRVI). The Zn(2+) site is built by C32, C35, C54, and H59. A PFVFL motif is present at residues 113–117 (PFVFL).

In terms of assembly, interacts with CO (via B-box) and with TPL (via PFVFL motif). Highly expressed in shoot apical meristems and in vascular tissues of leaves. Also detected in petioles.

Its subcellular location is the nucleus. In terms of biological role, developmental regulator acting by forming heterodimeric complexes, that sequester CO and CO-like (COL) proteins into non-functional complexes. Engages CO and the transcriptional repressor TPL in a tripartite complex. Involved in the CO-mediated long-day flowering-promotion pathway. The polypeptide is B-box domain protein 30 (Arabidopsis thaliana (Mouse-ear cress)).